The sequence spans 462 residues: Cleavage and polyadenylation specificity factor subunit 7 (462 aa).

Disordered stretches follow at residues 34 to 68 (VLTA…NKTP) and 161 to 213 (TRQN…PSVL). Positions 50–62 (EPPPPVRQEPAPK) are enriched in pro residues. An RRM domain is found at 82-162 (AAVYVGSFSW…EKVDVRPATR (81 aa)). The span at 181-190 (HSRDSSDSAD) shows a compositional bias: basic and acidic residues. Thr194 is subject to Phosphothreonine. Phosphoserine is present on Ser196. Residue Lys345 forms a Glycyl lysine isopeptide (Lys-Gly) (interchain with G-Cter in SUMO2) linkage. A disordered region spans residues 400-462 (SVGASGSSSR…HRDRERDRHH (63 aa)). Phosphoserine occurs at positions 404 and 414. The tract at residues 409–460 (RKRHRSRERSPSRSRESSRRHRDLLHNEDRHDDYFQERNREHERHRDRERDR) is arg/Ser-rich domain. 2 stretches are compositionally biased toward basic and acidic residues: residues 416–425 (ERSPSRSRES) and 432–462 (LLHN…DRHH).

Belongs to the RRM CPSF6/7 family. In terms of assembly, component of the cleavage factor Im (CFIm) complex which is a heterotetramer composed of two subunits of NUDT21/CPSF5 and two subunits of CPSF6 or CPSF7 or a heterodimer of CPSF6 and CPSF7. The cleavage factor Im (CFIm) complex associates with the CPSF and CSTF complexes to promote the assembly of the core mRNA 3'-processing machinery. Interacts with NUDT21/CPSF5. Interacts (via Arg/Ser-rich domain) with FIP1L1 (preferentially via unphosphorylated form and Arg/Glu/Asp-rich region); this interaction mediates, at least in part, the interaction between the CFIm and CPSF complexes and may be inhibited by CPSF7 hyper-phosphorylation. Phosphorylated. In terms of processing, asymmetrically dimethylated on arginine residues by PRMT1.

The protein resides in the nucleus. It is found in the cytoplasm. Functionally, component of the cleavage factor Im (CFIm) complex that functions as an activator of the pre-mRNA 3'-end cleavage and polyadenylation processing required for the maturation of pre-mRNA into functional mRNAs. CFIm contributes to the recruitment of multiprotein complexes on specific sequences on the pre-mRNA 3'-end, so called cleavage and polyadenylation signals (pA signals). Most pre-mRNAs contain multiple pA signals, resulting in alternative cleavage and polyadenylation (APA) producing mRNAs with variable 3'-end formation. The CFIm complex acts as a key regulator of cleavage and polyadenylation site choice during APA through its binding to 5'-UGUA-3' elements localized in the 3'-untranslated region (UTR) for a huge number of pre-mRNAs. CPSF7 activates directly the mRNA 3'-processing machinery. Binds to pA signals in RNA substrates. This Rattus norvegicus (Rat) protein is Cleavage and polyadenylation specificity factor subunit 7.